The chain runs to 192 residues: uncharacterized protein (192 aa).

Residues 71 to 100 (NNVLPEPSKPNNPVVNPPVSPIQPKTDPEQ) are disordered. Over residues 77–91 (PSKPNNPVVNPPVSP) the composition is skewed to pro residues.

This is an uncharacterized protein from Caenorhabditis elegans.